The chain runs to 147 residues: Fluoride-specific ion channel FluC 1 (147 aa).

Transmembrane regions (helical) follow at residues 29–49 (YVYI…ISFL), 61–81 (IANL…IAFF), 90–110 (AITT…LELI), and 118–138 (FITL…LCYV). Residues glycine 97 and threonine 100 each contribute to the Na(+) site.

Belongs to the fluoride channel Fluc/FEX (TC 1.A.43) family.

It is found in the cell membrane. It carries out the reaction fluoride(in) = fluoride(out). With respect to regulation, na(+) is not transported, but it plays an essential structural role and its presence is essential for fluoride channel function. Functionally, fluoride-specific ion channel. Important for reducing fluoride concentration in the cell, thus reducing its toxicity. This Staphylococcus aureus (strain Mu50 / ATCC 700699) protein is Fluoride-specific ion channel FluC 1.